A 145-amino-acid polypeptide reads, in one-letter code: UPF0735 ACT domain-containing protein CPR_1404 (145 aa).

Residues 69-144 form the ACT domain; that stretch reads IFNMVVTHEK…GVEKVEFVAM (76 aa).

Belongs to the UPF0735 family.

This chain is UPF0735 ACT domain-containing protein CPR_1404, found in Clostridium perfringens (strain SM101 / Type A).